Reading from the N-terminus, the 559-residue chain is NAD-dependent histone deacetylase SIR2 (559 aa).

A disordered region spans residues M1–G73. Residues N39 to D51 are compositionally biased toward basic and acidic residues. The span at E52–E62 shows a compositional bias: acidic residues. Residues R223–D514 form the Deacetylase sirtuin-type domain. NAD(+)-binding positions include G248–Y267 and Q330–D333. The Proton acceptor role is filled by H350. Residues C358, C361, C382, and C385 each coordinate Zn(2+). NAD(+) is bound by residues G458–S460, N483–D485, and C500.

This sequence belongs to the sirtuin family. Class I subfamily. Zn(2+) serves as cofactor.

Its subcellular location is the nucleus. It catalyses the reaction N(6)-acetyl-L-lysyl-[protein] + NAD(+) + H2O = 2''-O-acetyl-ADP-D-ribose + nicotinamide + L-lysyl-[protein]. NAD-dependent deacetylase. Heterochromatin component that silences transcription at silent mating loci, telomeres and the ribosomal DNA, and that also suppresses recombination in the rDNA and extends replicative life span. It acts as a NAD-dependent histone deacetylase, which deacetylates 'Lys-9' and 'Lys-14' of Histone H3 and 'Lys-16' of Histone H4. This Eremothecium gossypii (strain ATCC 10895 / CBS 109.51 / FGSC 9923 / NRRL Y-1056) (Yeast) protein is NAD-dependent histone deacetylase SIR2 (SIR2).